A 222-amino-acid chain; its full sequence is MSAVINKETLQAKIAEALKAGKPRRFKQSVELIVVLKGVDLSKPENRINLLVELPHPPKPNKIAAFAHGAFEVSAKNAGVDSIITRDQVEGLSGNKRAIRKLAKQYDFFIAPPDLMPLLGRVVGPIFGPRGKMPEVVPPNVDVKSVVERLRKAVRVRFRNEPVVKVRIGSEGQSPKEILENALVVLEEVNRKFPLRQYLKDLYFKKTMGPPVKVRAVEALVK.

The protein belongs to the universal ribosomal protein uL1 family. As to quaternary structure, part of the 50S ribosomal subunit.

Binds directly to 23S rRNA. Probably involved in E site tRNA release. Its function is as follows. Protein L1 is also a translational repressor protein, it controls the translation of its operon by binding to its mRNA. In Pyrobaculum aerophilum (strain ATCC 51768 / DSM 7523 / JCM 9630 / CIP 104966 / NBRC 100827 / IM2), this protein is Large ribosomal subunit protein uL1.